Consider the following 123-residue polypeptide: Ribonuclease P protein component (123 aa).

This sequence belongs to the RnpA family. Consists of a catalytic RNA component (M1 or rnpB) and a protein subunit.

The enzyme catalyses Endonucleolytic cleavage of RNA, removing 5'-extranucleotides from tRNA precursor.. Its function is as follows. RNaseP catalyzes the removal of the 5'-leader sequence from pre-tRNA to produce the mature 5'-terminus. It can also cleave other RNA substrates such as 4.5S RNA. The protein component plays an auxiliary but essential role in vivo by binding to the 5'-leader sequence and broadening the substrate specificity of the ribozyme. The polypeptide is Ribonuclease P protein component (Bordetella bronchiseptica (strain ATCC BAA-588 / NCTC 13252 / RB50) (Alcaligenes bronchisepticus)).